The sequence spans 129 residues: Small ribosomal subunit protein uS11 (129 aa).

It belongs to the universal ribosomal protein uS11 family. In terms of assembly, part of the 30S ribosomal subunit. Interacts with proteins S7 and S18. Binds to IF-3.

In terms of biological role, located on the platform of the 30S subunit, it bridges several disparate RNA helices of the 16S rRNA. Forms part of the Shine-Dalgarno cleft in the 70S ribosome. This chain is Small ribosomal subunit protein uS11, found in Francisella tularensis subsp. holarctica (strain FTNF002-00 / FTA).